The sequence spans 460 residues: NADH-ubiquinone oxidoreductase chain 4 (460 aa).

Helical transmembrane passes span 20 to 42, 61 to 81, 93 to 113, 114 to 134, 148 to 168, 195 to 215, 225 to 245, 258 to 278, 285 to 304, 309 to 331, 351 to 371, and 394 to 414; these read PKWL…LTWL, PLST…VLAS, QRLY…AFGA, TEII…LIII, TYFL…LLLL, IWWA…GVHL, PVAG…YGMM, LAYP…SICL, SLIA…GILI, GFTG…FCLA, MIFP…LALP, and IILT…LFLM.

It belongs to the complex I subunit 4 family.

The protein resides in the mitochondrion membrane. It catalyses the reaction a ubiquinone + NADH + 5 H(+)(in) = a ubiquinol + NAD(+) + 4 H(+)(out). Functionally, core subunit of the mitochondrial membrane respiratory chain NADH dehydrogenase (Complex I) that is believed to belong to the minimal assembly required for catalysis. Complex I functions in the transfer of electrons from NADH to the respiratory chain. The immediate electron acceptor for the enzyme is believed to be ubiquinone. The chain is NADH-ubiquinone oxidoreductase chain 4 (MT-ND4) from Formosania lacustris (Oriental stream loach).